We begin with the raw amino-acid sequence, 270 residues long: Cerberus (270 aa).

Residues 1 to 20 form the signal peptide; that stretch reads MLLNVLRICIIVCLVNDGAG. 3 N-linked (GlcNAc...) asparagine glycosylation sites follow: asparagine 103, asparagine 112, and asparagine 154. 4 cysteine pairs are disulfide-bonded: cysteine 169-cysteine 215, cysteine 183-cysteine 229, cysteine 193-cysteine 245, and cysteine 197-cysteine 247. One can recognise a CTCK domain in the interval 169-253; the sequence is CKTLPFTQNI…ECTCEAHKSN (85 aa). Residue asparagine 228 is glycosylated (N-linked (GlcNAc...) asparagine).

This sequence belongs to the DAN family. The long chain interacts with nodal/nr-1, bmp4 and wnt8, thereby inhibiting their function. The short chain interacts with nodal/nr-1 but not bmp4 or wnt8. In terms of tissue distribution, a component of the Nieuwkoop signaling center in the blastula. Expressed transiently in a broad anterior domain of the gastrula, including the anterior endoderm of the Spemann's organizer and more laterally the cardiac primordia. Expression is excluded from the prospective prechordal plate region and the ring of cells that give rise to the trunk-tail mesoderm.

The protein resides in the secreted. Functionally, inhibits wnt, nodal/nr-1 and bmp signaling in the embryo to promote head formation and anterior neural induction. Within the endoderm, acts as an essential mediator of nodal/nr-1-induced cardiogenesis in the overlying mesoderm. In Xenopus laevis (African clawed frog), this protein is Cerberus.